A 244-amino-acid chain; its full sequence is Methylthioribulose-1-phosphate dehydratase (244 aa).

Cys89 is a substrate binding site. His107 and His109 together coordinate Zn(2+). The active-site Proton donor/acceptor is the Glu130. Residue His192 coordinates Zn(2+).

The protein belongs to the aldolase class II family. MtnB subfamily. Zn(2+) is required as a cofactor.

The protein localises to the cytoplasm. It carries out the reaction 5-(methylsulfanyl)-D-ribulose 1-phosphate = 5-methylsulfanyl-2,3-dioxopentyl phosphate + H2O. The protein operates within amino-acid biosynthesis; L-methionine biosynthesis via salvage pathway; L-methionine from S-methyl-5-thio-alpha-D-ribose 1-phosphate: step 2/6. In terms of biological role, catalyzes the dehydration of methylthioribulose-1-phosphate (MTRu-1-P) into 2,3-diketo-5-methylthiopentyl-1-phosphate (DK-MTP-1-P). The protein is Methylthioribulose-1-phosphate dehydratase of Saccharomyces cerevisiae (strain AWRI1631) (Baker's yeast).